The following is a 220-amino-acid chain: Glutathione S-transferase U26 (220 aa).

The GST N-terminal domain maps to 4–83 (DQVILLDYWP…YIDEVWSDAS (80 aa)). Residues 14-15 (SM), 40-41 (VK), 54-55 (KI), and 67-68 (ES) each bind glutathione. In terms of domain architecture, GST C-terminal spans 89 to 210 (DPYQKSRARF…ADSDRIIEYV (122 aa)).

This sequence belongs to the GST superfamily. Tau family.

It localises to the cytoplasm. Its subcellular location is the cytosol. The enzyme catalyses RX + glutathione = an S-substituted glutathione + a halide anion + H(+). Its function is as follows. In vitro, possesses glutathione S-transferase activity toward 1-chloro-2,4-dinitrobenzene (CDNB). May be involved in the conjugation of reduced glutathione to a wide number of exogenous and endogenous hydrophobic electrophiles and have a detoxification role against certain herbicides. This Arabidopsis thaliana (Mouse-ear cress) protein is Glutathione S-transferase U26 (GSTU26).